We begin with the raw amino-acid sequence, 502 residues long: Probable cytosol aminopeptidase (502 aa).

2 residues coordinate Mn(2+): Lys269 and Asp274. The active site involves Lys281. Mn(2+) contacts are provided by Asp292, Asp351, and Glu353. Arg355 is a catalytic residue.

Belongs to the peptidase M17 family. The cofactor is Mn(2+).

Its subcellular location is the cytoplasm. It catalyses the reaction Release of an N-terminal amino acid, Xaa-|-Yaa-, in which Xaa is preferably Leu, but may be other amino acids including Pro although not Arg or Lys, and Yaa may be Pro. Amino acid amides and methyl esters are also readily hydrolyzed, but rates on arylamides are exceedingly low.. The catalysed reaction is Release of an N-terminal amino acid, preferentially leucine, but not glutamic or aspartic acids.. Its function is as follows. Presumably involved in the processing and regular turnover of intracellular proteins. Catalyzes the removal of unsubstituted N-terminal amino acids from various peptides. This Shewanella sediminis (strain HAW-EB3) protein is Probable cytosol aminopeptidase.